We begin with the raw amino-acid sequence, 791 residues long: Subtilisin-like protease SBT5.6 (791 aa).

An N-terminal signal peptide occupies residues 1 to 20 (MKKLTSLFPLLFLIPLLASC). Residues 21 to 108 (AEEKQVYIVY…KSHPRKYEAH (88 aa)) constitute a propeptide, activation peptide. Residues 26-104 (VYIVYFGEHK…VSVFKSHPRK (79 aa)) form the Inhibitor I9 domain. One can recognise a Peptidase S8 domain in the interval 134–645 (ADDRFRVGRN…SGHFRPTKAA (512 aa)). The Charge relay system role is filled by aspartate 160. 2 N-linked (GlcNAc...) asparagine glycosylation sites follow: asparagine 193 and asparagine 219. Histidine 235 (charge relay system) is an active-site residue. One can recognise a PA domain in the interval 400–494 (FAPLVYASNV…VTPTVVDKIL (95 aa)). Asparagine 417 carries an N-linked (GlcNAc...) asparagine glycan. Residue serine 578 is the Charge relay system of the active site. N-linked (GlcNAc...) asparagine glycans are attached at residues asparagine 666, asparagine 713, and asparagine 761.

This sequence belongs to the peptidase S8 family.

The protein resides in the secreted. This chain is Subtilisin-like protease SBT5.6, found in Arabidopsis thaliana (Mouse-ear cress).